A 141-amino-acid chain; its full sequence is Hemoglobin subunit alpha (141 aa).

The 141-residue stretch at 1–141 (VLSPADKTNI…VSTVLTSKYR (141 aa)) folds into the Globin domain. S3 bears the Phosphoserine mark. K7 bears the N6-succinyllysine mark. At T8 the chain carries Phosphothreonine. K11 is subject to N6-succinyllysine. K16 carries the N6-acetyllysine; alternate modification. The residue at position 16 (K16) is an N6-succinyllysine; alternate. Y24 is modified (phosphotyrosine). S35 carries the phosphoserine modification. Residue K40 is modified to N6-succinyllysine. S49 is modified (phosphoserine). H58 contributes to the O2 binding site. Residue H87 participates in heme b binding. The residue at position 102 (S102) is a Phosphoserine. A Phosphothreonine modification is found at T108. Position 124 is a phosphoserine (S124). A phosphothreonine mark is found at T134 and T137. Position 138 is a phosphoserine (S138).

The protein belongs to the globin family. In terms of assembly, heterotetramer of two alpha chains and two beta chains. As to expression, red blood cells.

In terms of biological role, involved in oxygen transport from the lung to the various peripheral tissues. Hemopressin acts as an antagonist peptide of the cannabinoid receptor CNR1. Hemopressin-binding efficiently blocks cannabinoid receptor CNR1 and subsequent signaling. The sequence is that of Hemoglobin subunit alpha (HBA) from Canis lupus familiaris (Dog).